The sequence spans 202 residues: Peptide deformylase 2 (202 aa).

Fe cation is bound by residues Cys120 and His162. The active site involves Glu163. Position 166 (His166) interacts with Fe cation.

Belongs to the polypeptide deformylase family. Fe(2+) is required as a cofactor.

The enzyme catalyses N-terminal N-formyl-L-methionyl-[peptide] + H2O = N-terminal L-methionyl-[peptide] + formate. Removes the formyl group from the N-terminal Met of newly synthesized proteins. Requires at least a dipeptide for an efficient rate of reaction. N-terminal L-methionine is a prerequisite for activity but the enzyme has broad specificity at other positions. The chain is Peptide deformylase 2 from Rickettsia conorii (strain ATCC VR-613 / Malish 7).